We begin with the raw amino-acid sequence, 145 residues long: uncharacterized protein (145 aa).

The helical transmembrane segment at 104–124 threads the bilayer; that stretch reads IEVIILSHHFVIGFSFLLGLL.

Its subcellular location is the membrane. This is an uncharacterized protein from Saccharomyces cerevisiae (strain ATCC 204508 / S288c) (Baker's yeast).